A 172-amino-acid polypeptide reads, in one-letter code: NADH-quinone oxidoreductase subunit B (172 aa).

4 residues coordinate [4Fe-4S] cluster: Cys46, Cys47, Cys111, and Cys141.

The protein belongs to the complex I 20 kDa subunit family. In terms of assembly, NDH-1 is composed of 14 different subunits. Subunits NuoB, C, D, E, F, and G constitute the peripheral sector of the complex. It depends on [4Fe-4S] cluster as a cofactor.

It localises to the cell membrane. It catalyses the reaction a quinone + NADH + 5 H(+)(in) = a quinol + NAD(+) + 4 H(+)(out). NDH-1 shuttles electrons from NADH, via FMN and iron-sulfur (Fe-S) centers, to quinones in the respiratory chain. The immediate electron acceptor for the enzyme in this species is believed to be a menaquinone. Couples the redox reaction to proton translocation (for every two electrons transferred, four hydrogen ions are translocated across the cytoplasmic membrane), and thus conserves the redox energy in a proton gradient. The chain is NADH-quinone oxidoreductase subunit B from Bacillus anthracis (strain A0248).